The sequence spans 875 residues: Cytosolic phospholipase A2 epsilon (875 aa).

Positions 16–70 (THASEGHHGLGTSMLVPKNPQGEEDSKLGRNCSGFEDAQDPQTAVPSSPLLSMAS) are disordered. The C2 domain occupies 60 to 183 (VPSSPLLSMA…CLRNKTHVKF (124 aa)). Low complexity predominate over residues 61–70 (PSSPLLSMAS). Ca(2+) contacts are provided by D97, D103, D153, D155, and D161. The PLA2c domain maps to 332 to 875 (PCSDTLDVRL…KKRMRSQCPS (544 aa)). S420 serves as the catalytic Nucleophile. Catalysis depends on D708, which acts as the Proton acceptor. S808 is subject to Phosphoserine. A required for localization at membrane structures region spans residues 865–875 (EKKRMRSQCPS).

It depends on Ca(2+) as a cofactor. Predominantly expressed in brain, heart, skeletal muscle, testis and thyroid. Expressed in neurons but not astrocytes or microglia. Expressed at lower level in stomach.

It is found in the cytoplasm. Its subcellular location is the cytosol. It localises to the early endosome membrane. The protein localises to the lysosome membrane. The protein resides in the cell membrane. The catalysed reaction is a 1,2-diacyl-sn-glycero-3-phosphoethanolamine + a 1,2-diacyl-sn-glycero-3-phosphocholine = an N-acyl-1,2-diacyl-sn-glycero-3-phosphoethanolamine + a 2-acyl-sn-glycero-3-phosphocholine + H(+). It carries out the reaction 1-hexadecanoyl-2-octadecanoyl-sn-glycero-3-phosphocholine + 1,2-di-(9Z-octadecenoyl)-sn-glycero-3-phosphoethanolamine = 2-octadecanoyl-sn-glycero-3-phosphocholine + N-hexadecanoyl-1,2-di-(9Z-octadecenoyl)-sn-glycero-3-phosphoethanolamine + H(+). It catalyses the reaction 1-octadecanoyl-2-hexadecanoyl-sn-glycero-3-phosphocholine + 1,2-di-(9Z-octadecenoyl)-sn-glycero-3-phosphoethanolamine = N-octadecanoyl-1,2-di-(9Z-octadecenoyl)-sn-glycero-3-phosphoethanolamine + 2-hexadecanoyl-sn-glycero-3-phosphocholine + H(+). The enzyme catalyses 1,2-di-(9Z-octadecenoyl)-sn-glycero-3-phosphoethanolamine + 1,2-dihexadecanoyl-sn-glycero-3-phosphocholine = N-hexadecanoyl-1,2-di-(9Z-octadecenoyl)-sn-glycero-3-phosphoethanolamine + 2-hexadecanoyl-sn-glycero-3-phosphocholine + H(+). The catalysed reaction is 1,2-di-(5Z,8Z,11Z,14Z-eicosatetraenoyl)-sn-glycero-3-phosphocholine + 1,2-di-(9Z-octadecenoyl)-sn-glycero-3-phosphoethanolamine = N-(5Z,8Z,11Z,14Z-eicosatetraenoyl)-1,2-di-(9Z-octadecenoyl)-sn-glycero-3-phosphoethanolamine + 2-(5Z,8Z,11Z,14Z)-eicosatetraenoyl-sn-glycero-3-phosphocholine + H(+). It carries out the reaction 2 1,2-di-(9Z-octadecenoyl)-sn-glycero-3-phosphoethanolamine = N,1,2-tri-(9Z-octadecenoyl)-sn-glycero-3-phosphoethanolamine + 2-(9Z-octadecenoyl)-sn-glycero-3-phosphoethanolamine + H(+). It catalyses the reaction a 1,2-diacyl-sn-glycero-3-phosphocholine + H2O = a 1-acyl-sn-glycero-3-phosphocholine + a fatty acid + H(+). The enzyme catalyses 1-(1Z-octadecenyl)-2-(9Z-octadecenoyl)-sn-glycero-3-phosphoethanolamine + 1,2-dihexadecanoyl-sn-glycero-3-phosphocholine = 1-O-(1Z-octadecenoyl)-2-(9Z-octadecenoyl)-sn-glycero-3-phospho-N-hexadecanoyl-ethanolamine + 2-hexadecanoyl-sn-glycero-3-phosphocholine + H(+). The catalysed reaction is 1-hexadecanoyl-2-(5Z,8Z,11Z,14Z-eicosatetraenoyl)-sn-glycero-3-phosphocholine + H2O = 1-hexadecanoyl-sn-glycero-3-phosphocholine + (5Z,8Z,11Z,14Z)-eicosatetraenoate + H(+). It carries out the reaction 1-hexadecanoyl-sn-glycero-3-phosphocholine + H2O = sn-glycerol 3-phosphocholine + hexadecanoate + H(+). Stimulated by cytosolic Ca(2+). Stimulated by anionic phospholipids such as phosphatidylserine. Functionally, calcium-dependent N-acyltransferase involved in the biosynthesis of N-acyl ethanolamines (NAEs) in the brain. Transfers the sn-1 fatty acyl chain of phosphatidylcholine (fatty acyl donor) to the amine group of phosphatidylethanolamine (fatty acyl acceptor) to generate N-acyl phosphatidylethanolamine (NAPE). Similarly can use plasmenylethanolamine as a fatty acyl acceptor to form N-acyl plasmenylethanolamine (N-Acyl-PlsEt). Both NAPE and N-Acyl-PlsEt can serve as precursors of bioactive NAEs like N-arachidonoyl phosphatidylethanolamine also called anandamide. Has weak phospholipase A2 and lysophospholipase activities. Regulates intracellular membrane trafficking that requires modulation of membrane curvature as it occurs by enrichment in lysophospholipids. Promotes tubule formation involved in clathrin-independent endocytotic trafficking and cargo recycling. The polypeptide is Cytosolic phospholipase A2 epsilon (Pla2g4e) (Mus musculus (Mouse)).